Here is a 345-residue protein sequence, read N- to C-terminus: GTP cyclohydrolase-2 (345 aa).

A disordered region spans residues 1 to 27 (MTIDNYDNSKQDSSKYEVSGTGDGRNG). A GTP-binding site is contributed by 143-147 (RIHSE). 3 residues coordinate Zn(2+): cysteine 148, cysteine 159, and cysteine 161. GTP-binding positions include glutamine 164, 197-199 (EGR), and threonine 219. The active-site Proton acceptor is the aspartate 231. Arginine 233 serves as the catalytic Nucleophile. Residues threonine 254 and lysine 259 each contribute to the GTP site. Positions 312–345 (PLKLHTNPQPTETSEAQNQNRMNSALSSTSTLAI) are disordered. Residues 317 to 345 (TNPQPTETSEAQNQNRMNSALSSTSTLAI) show a composition bias toward polar residues.

It belongs to the GTP cyclohydrolase II family. Requires Zn(2+) as cofactor.

The catalysed reaction is GTP + 4 H2O = 2,5-diamino-6-hydroxy-4-(5-phosphoribosylamino)-pyrimidine + formate + 2 phosphate + 3 H(+). It functions in the pathway cofactor biosynthesis; riboflavin biosynthesis; 5-amino-6-(D-ribitylamino)uracil from GTP: step 1/4. Catalyzes the conversion of GTP to 2,5-diamino-6-ribosylamino-4(3H)-pyrimidinone 5'-phosphate (DARP), formate and pyrophosphate. This is GTP cyclohydrolase-2 (RIB1) from Saccharomyces cerevisiae (strain ATCC 204508 / S288c) (Baker's yeast).